The chain runs to 551 residues: Adenylyl cyclase-associated protein (551 aa).

The disordered stretch occupies residues 34 to 55; sequence SGHKPLPNMHRPSRDSNSQTHN. The residue at position 92 (S92) is a Phosphoserine. T96 carries the phosphothreonine modification. Residues 288–300 show a composition bias toward polar residues; sequence SASKTQAPSSGDS. 2 disordered regions span residues 288–333 and 348–395; these read SASK…NKGD and TSGL…PVKP. Over residues 305–315 the composition is skewed to pro residues; the sequence is LPPPPPPPPPS. A compositionally biased stretch (basic and acidic residues) spans 352-361; it reads RKVDKSEMTH. Residues 395-529 form the C-CAP/cofactor C-like domain; the sequence is PPRIELENTK…EEGDYAERAV (135 aa).

The protein belongs to the CAP family.

The N-terminal domain binds to adenylyl cyclase, thereby enabling adenylyl cyclase to be activated by upstream regulatory signals, such as Ras. The C-terminal domain is required for normal cellular morphology and growth control. The polypeptide is Adenylyl cyclase-associated protein (cap1) (Schizosaccharomyces pombe (strain 972 / ATCC 24843) (Fission yeast)).